A 217-amino-acid polypeptide reads, in one-letter code: Probable transaldolase (217 aa).

The Schiff-base intermediate with substrate role is filled by Lys84.

The protein belongs to the transaldolase family. Type 3B subfamily.

The protein resides in the cytoplasm. The catalysed reaction is D-sedoheptulose 7-phosphate + D-glyceraldehyde 3-phosphate = D-erythrose 4-phosphate + beta-D-fructose 6-phosphate. The protein operates within carbohydrate degradation; pentose phosphate pathway; D-glyceraldehyde 3-phosphate and beta-D-fructose 6-phosphate from D-ribose 5-phosphate and D-xylulose 5-phosphate (non-oxidative stage): step 2/3. In terms of biological role, transaldolase is important for the balance of metabolites in the pentose-phosphate pathway. The sequence is that of Probable transaldolase from Roseiflexus sp. (strain RS-1).